A 225-amino-acid chain; its full sequence is NAD(P)H-quinone oxidoreductase subunit K, chloroplastic (225 aa).

[4Fe-4S] cluster-binding residues include cysteine 43, cysteine 44, cysteine 108, and cysteine 139.

It belongs to the complex I 20 kDa subunit family. In terms of assembly, NDH is composed of at least 16 different subunits, 5 of which are encoded in the nucleus. The cofactor is [4Fe-4S] cluster.

It localises to the plastid. It is found in the chloroplast thylakoid membrane. It catalyses the reaction a plastoquinone + NADH + (n+1) H(+)(in) = a plastoquinol + NAD(+) + n H(+)(out). The catalysed reaction is a plastoquinone + NADPH + (n+1) H(+)(in) = a plastoquinol + NADP(+) + n H(+)(out). Functionally, NDH shuttles electrons from NAD(P)H:plastoquinone, via FMN and iron-sulfur (Fe-S) centers, to quinones in the photosynthetic chain and possibly in a chloroplast respiratory chain. The immediate electron acceptor for the enzyme in this species is believed to be plastoquinone. Couples the redox reaction to proton translocation, and thus conserves the redox energy in a proton gradient. The chain is NAD(P)H-quinone oxidoreductase subunit K, chloroplastic from Draba nemorosa (Woodland whitlowgrass).